A 289-amino-acid chain; its full sequence is Syntaxin-3 (289 aa).

At Met1–Lys263 the chain is on the cytoplasmic side. Positions Met32–Ala111 form a coiled coil. The t-SNARE coiled-coil homology domain occupies Leu191 to Ala253. A helical; Anchor for type IV membrane protein transmembrane segment spans residues Leu264–Leu284. Residues Ser285–Lys289 lie on the Extracellular side of the membrane.

It belongs to the syntaxin family. As to quaternary structure, interacts with REEP6. Interacts with PRPH2 in rod and cone photoreceptors. Interacts with ROM1. Interacts with SNAP25. Interacts with VAMP2. Heart, spleen, lung and kidney.

Its subcellular location is the membrane. Functionally, potentially involved in docking of synaptic vesicles at presynaptic active zones. Apical receptor involved in membrane fusion of apical vesicles. Essential for survival of retinal photoreceetors. The sequence is that of Syntaxin-3 (Stx3) from Rattus norvegicus (Rat).